The following is a 435-amino-acid chain: Eukaryotic translation initiation factor 3 subunit E (435 aa).

The PCI domain occupies 219-392 (FFNHPKGRDL…GHVVMGTQPL (174 aa)).

Belongs to the eIF-3 subunit E family. As to quaternary structure, component of the eukaryotic translation initiation factor 3 (eIF-3) complex. The eIF-3 complex interacts with pix. Interacts with mxt. In terms of tissue distribution, expression levels in females and males are relatively similar 10 days after oviposition, however by day 15 expression is higher in gravid females than in males (at protein level).

Its subcellular location is the cytoplasm. It localises to the microsome. The protein localises to the endoplasmic reticulum. Component of the eukaryotic translation initiation factor 3 (eIF-3) complex, which is involved in protein synthesis of a specialized repertoire of mRNAs and, together with other initiation factors, stimulates binding of mRNA and methionyl-tRNAi to the 40S ribosome. The eIF-3 complex specifically targets and initiates translation of a subset of mRNAs involved in cell proliferation. In addition to its role in the eIF-3 complex, also functions in protein ubiquitination and degradation. During mitosis required for regulating mitotic microtubule growth and kinetochore formation, and consequently is required for satisfying the spindle assembly checkpoint (SAC) during metaphase to prevent delays in mitotic progression. This is likely by promoting the ubiquitination and degradation of Klp67A, a kinesin-like protein that suppresses microtubule polymerization at plus ends. Acts in the COP9 signalosome (CSN) mediated regulation of cullin neddylation by promoting Cul1 and Cul3 neddylation and negatively regulating the CSN complex subunit CSN5. This is Eukaryotic translation initiation factor 3 subunit E from Drosophila melanogaster (Fruit fly).